A 371-amino-acid polypeptide reads, in one-letter code: 3-methyl-D-ornithine--L-lysine ligase (371 aa).

Lysine 18 lines the ATP pocket. L-lysine is bound at residue 19–20 (LQ). ATP is bound by residues aspartate 39, 57-58 (NI), and 80-81 (EN). Glutamate 80 contributes to the L-lysine binding site. The ATP-grasp domain occupies 93-277 (EKFSCPVLFD…LIELLFRAFN (185 aa)). Residues lysine 112, lysine 139, serine 146, and 168–171 (EEYV) each bind ADP. D-ornithine contacts are provided by residues 177 to 179 (SLE) and aspartate 233. Mg(2+) is bound by residues glutamate 235, glutamate 247, and aspartate 249. Glutamate 247 is a binding site for ADP. D-ornithine is bound by residues 251 to 256 (RFPSQT) and glutamate 310. Serine 254 and glutamate 310 together coordinate L-lysine.

Belongs to the PylC family. Mg(2+) is required as a cofactor.

It carries out the reaction (3R)-3-methyl-D-ornithine + L-lysine + ATP = (3R)-3-methyl-D-ornithyl-N(6)-L-lysine + ADP + phosphate + H(+). It functions in the pathway amino-acid biosynthesis; L-pyrrolysine biosynthesis. Is required for the biosynthesis of pyrrolysine. Catalyzes the ATP-dependent ligation between (3R)-3-methyl-D-ornithine and L-lysine, leading to (3R)-3-methyl-D-ornithyl-N6-L-lysine. Is also involved in the synthesis of pyrroline-carboxy-lysine (Pcl), a demethylated form of pyrrolysine that is generated by the pyrrolysine biosynthetic enzymes when the growth media is supplemented with D-ornithine. This is 3-methyl-D-ornithine--L-lysine ligase from Methanosarcina mazei (strain ATCC BAA-159 / DSM 3647 / Goe1 / Go1 / JCM 11833 / OCM 88) (Methanosarcina frisia).